Consider the following 331-residue polypeptide: Aromatic 2-oxoacid reductase (331 aa).

NAD(+) is bound by residues 154-155 (RI), D175, 205-206 (AP), N211, 232-234 (AAR), and D258. R234 is a catalytic residue. Residue E263 is part of the active site. The active-site Proton donor is the H295.

This sequence belongs to the D-isomer specific 2-hydroxyacid dehydrogenase family.

It catalyses the reaction (R)-3-phenyllactate + NAD(+) = 3-phenylpyruvate + NADH + H(+). It carries out the reaction (2R)-2-hydroxy-3-(4-hydroxyphenyl)propanoate + NAD(+) = 3-(4-hydroxyphenyl)pyruvate + NADH + H(+). The catalysed reaction is 3-(indol-3-yl)lactate + NAD(+) = indole-3-pyruvate + NADH + H(+). It functions in the pathway amino-acid degradation. Its function is as follows. Essential for the reductive metabolism of L-phenylalanine, L-tyrosine and L-tryptophan. Catalyzes the conversion of phenylpyruvic acid to phenyllactic acid, 4-hydroxy-phenylpyruvic acid to 4-hydroxy-phenyllactic acid, and indolepyruvic acid to indolelactic acid. The sequence is that of Aromatic 2-oxoacid reductase from Clostridium sporogenes (strain ATCC 7955 / DSM 767 / NBRC 16411 / NCIMB 8053 / NCTC 8594 / PA 3679).